The sequence spans 132 residues: Fatty acid-binding protein 1 (132 aa).

A fatty acid is bound by residues arginine 106 and 128 to 130 (RYY).

The protein belongs to the calycin superfamily. Fatty-acid binding protein (FABP) family. Monomer. As to expression, midgut.

The protein resides in the cytoplasm. Binds fatty acids in a 1:1 molar ratio. This chain is Fatty acid-binding protein 1 (MFB1), found in Manduca sexta (Tobacco hawkmoth).